A 197-amino-acid polypeptide reads, in one-letter code: Histidine biosynthesis bifunctional protein HisIE (197 aa).

Positions 1-108 (MMTLYPVVVQ…RFEETGSPTF (108 aa)) are phosphoribosyl-AMP cyclohydrolase. Residues 109–197 (WLELYRLVRK…VMRELEKRRK (89 aa)) are phosphoribosyl-ATP pyrophosphohydrolase.

This sequence in the N-terminal section; belongs to the PRA-CH family. In the C-terminal section; belongs to the PRA-PH family.

Its subcellular location is the cytoplasm. It carries out the reaction 1-(5-phospho-beta-D-ribosyl)-ATP + H2O = 1-(5-phospho-beta-D-ribosyl)-5'-AMP + diphosphate + H(+). It catalyses the reaction 1-(5-phospho-beta-D-ribosyl)-5'-AMP + H2O = 1-(5-phospho-beta-D-ribosyl)-5-[(5-phospho-beta-D-ribosylamino)methylideneamino]imidazole-4-carboxamide. It participates in amino-acid biosynthesis; L-histidine biosynthesis; L-histidine from 5-phospho-alpha-D-ribose 1-diphosphate: step 2/9. The protein operates within amino-acid biosynthesis; L-histidine biosynthesis; L-histidine from 5-phospho-alpha-D-ribose 1-diphosphate: step 3/9. The protein is Histidine biosynthesis bifunctional protein HisIE (hisI) of Thermotoga maritima (strain ATCC 43589 / DSM 3109 / JCM 10099 / NBRC 100826 / MSB8).